A 329-amino-acid chain; its full sequence is ATP-dependent (S)-NAD(P)H-hydrate dehydratase (329 aa).

The transit peptide at 1-28 directs the protein to the mitochondrion; it reads MALGPGCRAVRGCRPVLKRAFSLHKAHS. One can recognise a YjeF C-terminal domain in the interval 35-326; that stretch reads ILQLVRSVVP…AEVGPAFRRL (292 aa). Lysine 49 bears the N6-acetyllysine mark. Residue tyrosine 67 is modified to Phosphotyrosine. (6S)-NADPHX is bound by residues glycine 135 and 188–194; that span reads NHVEFGR. ATP is bound by residues 228–232 and 247–256; these read KGEQD and GSGRRCGGQG. Aspartate 257 is a (6S)-NADPHX binding site.

The protein belongs to the NnrD/CARKD family. It depends on Mg(2+) as a cofactor.

Its subcellular location is the mitochondrion. The enzyme catalyses (6S)-NADHX + ATP = ADP + phosphate + NADH + H(+). It catalyses the reaction (6S)-NADPHX + ATP = ADP + phosphate + NADPH + H(+). In terms of biological role, catalyzes the dehydration of the S-form of NAD(P)HX at the expense of ATP, which is converted to ADP. Together with NAD(P)HX epimerase, which catalyzes the epimerization of the S- and R-forms, the enzyme allows the repair of both epimers of NAD(P)HX, a damaged form of NAD(P)H that is a result of enzymatic or heat-dependent hydration. This Bos taurus (Bovine) protein is ATP-dependent (S)-NAD(P)H-hydrate dehydratase.